Here is a 126-residue protein sequence, read N- to C-terminus: C-type natriuretic peptide (126 aa).

Residues 1–23 (MHLSQLLACALLLTLLSLRPSEA) form the signal peptide. Residues 20–71 (PSEAKPGAPPKVPRTPPAEELAEPQAAGGGQKKGDKAPGGGGANLKGDRSRL) form a disordered region. The propeptide occupies 24–73 (KPGAPPKVPRTPPAEELAEPQAAGGGQKKGDKAPGGGGANLKGDRSRLLR). Positions 26 to 35 (GAPPKVPRTP) are enriched in pro residues. Residues 46–63 (AGGGQKKGDKAPGGGGAN) are compositionally biased toward gly residues. Cys-110 and Cys-126 are oxidised to a cystine.

Belongs to the natriuretic peptide family. In terms of processing, degraded by IDE (in vitro). In the kidney, predominantly expressed in the distal tubular cells (at protein level).

Its subcellular location is the secreted. Hormone which plays a role in endochondral ossification through regulation of cartilaginous growth plate chondrocytes proliferation and differentiation. May also be vasoactive and natriuretic. Acts by specifically binding and stimulating NPR2 to produce cGMP. Binds the clearance receptor NPR3. In Homo sapiens (Human), this protein is C-type natriuretic peptide (NPPC).